We begin with the raw amino-acid sequence, 503 residues long: Maturase K (503 aa).

Belongs to the intron maturase 2 family. MatK subfamily.

The protein localises to the plastid. It localises to the chloroplast. Functionally, usually encoded in the trnK tRNA gene intron. Probably assists in splicing its own and other chloroplast group II introns. The chain is Maturase K from Diospyros kaki (Kaki persimmon).